The sequence spans 287 residues: MAIRNFRPYTPGTRTRVVTDFSEITSRKPERTLVVAKHRRKGRNNRGVITCRHRGGGHKRLYRVVDFRRNKHGVPAKVAAIHYDPHRNARLALLFYADGEKRYILAPAGVQVGQTVVSGPDAPIENGNAMPLSSVPLGSAVHCVELYAGRGGQMVRTAGASAQVMAKEGDYVALKLPSTEVRLVRRECYATLGEVGNSEMRNTSLGKAGRRRWLGRRPQVRGSVMNPCDHPHGGGEGRAPIGRSGPVTPWGKPALGLKTRKRNKPSNQYVLRKRRKTSKRSRGGRDS.

The interval 221–287 is disordered; that stretch reads RGSVMNPCDH…SKRSRGGRDS (67 aa). The segment covering 271–287 has biased composition (basic residues); the sequence is LRKRRKTSKRSRGGRDS.

Belongs to the universal ribosomal protein uL2 family. Part of the 50S ribosomal subunit. Forms a bridge to the 30S subunit in the 70S ribosome.

In terms of biological role, one of the primary rRNA binding proteins. Required for association of the 30S and 50S subunits to form the 70S ribosome, for tRNA binding and peptide bond formation. It has been suggested to have peptidyltransferase activity; this is somewhat controversial. Makes several contacts with the 16S rRNA in the 70S ribosome. In Synechococcus sp. (strain CC9605), this protein is Large ribosomal subunit protein uL2.